The chain runs to 428 residues: Spliceosome RNA helicase DDX39B (428 aa).

The segment covering 1–19 (MAENDVDNELLDYEDDEVE) has biased composition (acidic residues). Residues 1-31 (MAENDVDNELLDYEDDEVETAAGGDGAEAPA) form a disordered region. Alanine 2 carries the post-translational modification N-acetylalanine. Residue lysine 36 is modified to N6-acetyllysine; alternate. Residue lysine 36 forms a Glycyl lysine isopeptide (Lys-Gly) (interchain with G-Cter in SUMO2); alternate linkage. A phosphoserine mark is found at serine 38 and serine 41. Residues 45 to 73 (SGFRDFLLKPELLRAIVDCGFEHPSEVQH) carry the Q motif motif. The Helicase ATP-binding domain maps to 76-249 (IPQAILGMDV…RKFMQDPMEI (174 aa)). 89-96 (AKSGMGKT) contributes to the ATP binding site. A Phosphothreonine modification is found at threonine 172. Residues 196-199 (DECD) carry the DECD box motif. One can recognise a Helicase C-terminal domain in the interval 261–422 (GLQQYYVKLK…ELPDEIDISS (162 aa)).

This sequence belongs to the DEAD box helicase family. DECD subfamily. In terms of assembly, homodimer, and heterodimer with DDX39A. DDX39B interacts with the THO subcomplex to form the THO-DDX39B complex which multimerizes into a 28-subunit tetrameric assembly. Component of the transcription/export (TREX) complex at least composed of ALYREF/THOC4, DDX39B, SARNP/CIP29, CHTOP and the THO subcomplex; in the complex interacts with THOC2. THOC1-THOC2-THOC3-DDX39B subcomplex is sufficient for the interaction with export factor NXF1-NXT1. TREX seems to have a dynamic structure involving ATP-dependent remodeling. Within the TREX complex bridges ALYREF/THOC4 and the THO subcomplex, and, in a ATP-dependent manner, ALYREF/THOC4 and SARNP/CIP29. Component of the spliceosome. Interacts directly with U2AF2. Interacts with RBM8A, RNPS1 and SRRM1, FYTTD1/UIF, THOC1, MX1 and POLDIP3. Interacts with LUZP4. Interacts with SARNP/CIP29 (via the C-terminal domain); the interaction is direct and facilitates RNA binding of DDX39B. (Microbial infection) Interacts with human cytomegalovirus/HHV-5 protein UL69.

It is found in the nucleus. The protein resides in the nucleus speckle. The protein localises to the cytoplasm. It catalyses the reaction ATP + H2O = ADP + phosphate + H(+). Functionally, involved in nuclear export of spliced and unspliced mRNA. Component of the TREX complex which is thought to couple mRNA transcription, processing and nuclear export, and specifically associates with spliced mRNA and not with unspliced pre-mRNA. The TREX complex is recruited to spliced mRNAs by a transcription-independent mechanism, binds to mRNA upstream of the exon-junction complex (EJC) and is recruited in a splicing- and cap-dependent manner to a region near the 5' end of the mRNA where it functions in mRNA export to the cytoplasm via the TAP/NXF1 pathway. The THOC1-THOC2-THOC3 core complex alone is sufficient to promote ATPase activity of DDX39B; in the complex THOC2 is the only component that directly interacts with DDX39B. Associates with SARNP/CIP29, which facilitates RNA binding of DDX39B and likely plays a role in mRNA export. May undergo several rounds of ATP hydrolysis during assembly of TREX to drive subsequent loading of components such as ALYREF/THOC4 and CHTOP onto mRNA. Also associates with pre-mRNA independent of ALYREF/THOC4. Involved in the nuclear export of intronless mRNA; the ATP-bound form is proposed to recruit export adapter ALYREF/THOC4 to intronless mRNA; its ATPase activity is cooperatively stimulated by RNA and ALYREF/THOC4 and ATP hydrolysis is thought to trigger the dissociation from RNA to allow the association of ALYREF/THOC4 and the NXF1-NXT1 heterodimer. Involved in transcription elongation and genome stability. In terms of biological role, splice factor that is required for the first ATP-dependent step in spliceosome assembly and for the interaction of U2 snRNP with the branchpoint. Has both RNA-stimulated ATP binding/hydrolysis activity and ATP-dependent RNA unwinding activity. Even with the stimulation of RNA, the ATPase activity is weak. Can only hydrolyze ATP but not other NTPs. The RNA stimulation of ATPase activity does not have a strong preference for the sequence and length of the RNA. However, ssRNA stimulates the ATPase activity much more strongly than dsRNA. Can unwind 5' or 3' overhangs or blunt end RNA duplexes in vitro. The ATPase and helicase activities are not influenced by U2AF2; the effect of ALYREF/THOC4 is reported conflictingly with [PubMed:23299939] reporting a stimulatory effect. (Microbial infection) The TREX complex is essential for the export of Kaposi's sarcoma-associated herpesvirus (KSHV) intronless mRNAs and infectious virus production. The chain is Spliceosome RNA helicase DDX39B from Homo sapiens (Human).